The primary structure comprises 751 residues: C2 domain-containing protein At1g53590 (751 aa).

Helical transmembrane passes span 2-22 and 26-46; these read ESSLIHHIIIVLLLLWFISSL and HAFFYFLALIYLYLVHERYVM. The SMP-LTD domain occupies 68-262; it reads DSESVRWMNY…QPNMLVVDME (195 aa). The C2 domain maps to 267–381; it reads PTSENWFFVD…RGGQRNDMWL (115 aa). Residues D298, D304, D352, D354, and D359 each contribute to the Ca(2+) site. Disordered stretches follow at residues 469–519 and 572–751; these read QIWE…GRGL and SGPL…SSSK. The segment covering 472-482 has biased composition (basic and acidic residues); it reads EPRKGKSRRLD. The segment covering 483-502 has biased composition (polar residues); the sequence is SQIQRTPNDESLSNGSSSTD. The segment covering 590 to 611 has biased composition (basic and acidic residues); the sequence is NSGKGHMKDVAKSFLKQAEKSA. A compositionally biased stretch (basic residues) spans 612–624; it reads KQIKHAFSRKGSM. A compositionally biased stretch (basic and acidic residues) spans 625-634; sequence KPRDGHKEIV. Residues 639–651 show a composition bias toward acidic residues; the sequence is SGTDSESSDDDDA. Composition is skewed to basic and acidic residues over residues 664–681 and 703–751; these read KLTRDGNIERTGDDDHVD and VEAK…SSSK. A coiled-coil region spans residues 701-728; the sequence is TDVEAKEEKLKEAAESETRDMDTAMNIK.

Belongs to the extended synaptotagmin family. The cofactor is Ca(2+).

Its subcellular location is the membrane. In Arabidopsis thaliana (Mouse-ear cress), this protein is C2 domain-containing protein At1g53590 (NTMC2T6.1).